The chain runs to 530 residues: Dual specificity calcium/calmodulin-dependent 3',5'-cyclic nucleotide phosphodiesterase 1A (530 aa).

Calmodulin-binding stretches follow at residues 24 to 44 (TEKMWQRLKGILRCLVKQLEK) and 114 to 137 (EKPRFRSIVHVVQAGIFVERMYRK). The 367-residue stretch at 142–508 (VGLAYPEAVI…ERWKELAAQG (367 aa)) folds into the PDEase domain. H219 functions as the Proton donor in the catalytic mechanism. Zn(2+)-binding residues include H223, H259, D260, and D366. Residue D260 participates in Mg(2+) binding. 2 disordered regions span residues 450-471 (TKTPSYGASRRSNMKGTTNDGT) and 502-530 (KELAAQGEPDPHKNSDLVNAEEKHAETHS). Residues 451-471 (KTPSYGASRRSNMKGTTNDGT) show a composition bias toward polar residues. The segment covering 510–530 (PDPHKNSDLVNAEEKHAETHS) has biased composition (basic and acidic residues).

It belongs to the cyclic nucleotide phosphodiesterase family. PDE1 subfamily. As to quaternary structure, homodimer. Interacts with YWHAZ. Requires Zn(2+) as cofactor. The cofactor is Mg(2+).

The enzyme catalyses a nucleoside 3',5'-cyclic phosphate + H2O = a nucleoside 5'-phosphate + H(+). It carries out the reaction 3',5'-cyclic GMP + H2O = GMP + H(+). It catalyses the reaction 3',5'-cyclic AMP + H2O = AMP + H(+). Its activity is regulated as follows. Type I PDE are activated by the binding of calmodulin in the presence of Ca(2+). In terms of biological role, calcium/calmodulin-dependent cyclic nucleotide phosphodiesterase with a dual specificity for the second messengers cGMP and cAMP, which are key regulators of many important physiological processes. Has a higher efficiency with cGMP compared to cAMP. The chain is Dual specificity calcium/calmodulin-dependent 3',5'-cyclic nucleotide phosphodiesterase 1A from Bos taurus (Bovine).